The following is a 120-amino-acid chain: Ribosome-binding factor A (120 aa).

Belongs to the RbfA family. Monomer. Binds 30S ribosomal subunits, but not 50S ribosomal subunits or 70S ribosomes.

It localises to the cytoplasm. Its function is as follows. One of several proteins that assist in the late maturation steps of the functional core of the 30S ribosomal subunit. Associates with free 30S ribosomal subunits (but not with 30S subunits that are part of 70S ribosomes or polysomes). Required for efficient processing of 16S rRNA. May interact with the 5'-terminal helix region of 16S rRNA. The sequence is that of Ribosome-binding factor A from Borrelia garinii subsp. bavariensis (strain ATCC BAA-2496 / DSM 23469 / PBi) (Borreliella bavariensis).